Here is a 472-residue protein sequence, read N- to C-terminus: Mixed lineage kinase domain-like protein (472 aa).

Residues 1 to 143 (MDKLGQIIKL…QEDRQDAEED (143 aa)) form an N-terminal bundle and brace (NBB); mediates INSP6 binding region. A coiled-coil region spans residues 61–81 (LGRFDEVLKEANQQIEKFSKK). Residue Ser-124 is modified to Phosphoserine. A coiled-coil region spans residues 138–229 (QDAEEDGNEN…VFNNPQAESV (92 aa)). A Protein kinase domain is found at 192 to 456 (GPPWTKLKTS…DGRSLSGRER (265 aa)). Residues 198 to 206 (LKTSKMSTI) and Lys-219 each bind ATP. Phosphoserine; by RIPK3 occurs at positions 345 and 347. A Phosphothreonine; by RIPK3 modification is found at Thr-349. Residue Ser-352 is modified to Phosphoserine; by RIPK3.

Belongs to the protein kinase superfamily. As to quaternary structure, homooligomer. Homotrimer; forms homotrimers on necroptosis induction. Upon TNF-induced necrosis, forms in complex with PGAM5, RIPK1 and RIPK3. Within this complex, may play a role in the proper targeting of RIPK1-RIPK3 to its downstream effector PGAM5. Interacts with RIPK3; the interaction is direct and promotes its phosphorylation and subsequent activation. Post-translationally, phosphorylation by RIPK3 induces a conformational switch that is required for necroptosis. It also induces homotrimerization and localization to the plasma membrane. As to expression, highly expressed in thymus, colon, intestine, liver, spleen and lung. Expressed at much lower level in skeletal muscle, heart and kidney. Not detected in brain.

Its subcellular location is the cytoplasm. The protein resides in the cell membrane. It is found in the nucleus. With respect to regulation, activated via binding to highly phosphorylated inositol phosphates such as inositolhexakisphosphate (InsP6) which mediates the release of an N-terminal auto-inhibitory region. Activation requires not only RIPK3-dependent phosphorylation but also binding to highly phosphorylated inositol phosphates. Functionally, pseudokinase that plays a key role in TNF-induced necroptosis, a programmed cell death process. Does not have protein kinase activity. Activated following phosphorylation by RIPK3, leading to homotrimerization, localization to the plasma membrane and execution of programmed necrosis characterized by calcium influx and plasma membrane damage. In addition to TNF-induced necroptosis, necroptosis can also take place in the nucleus in response to orthomyxoviruses infection: following ZBP1 activation, which senses double-stranded Z-RNA structures, nuclear RIPK3 catalyzes phosphorylation and activation of MLKL, promoting disruption of the nuclear envelope and leakage of cellular DNA into the cytosol. Binds to highly phosphorylated inositol phosphates such as inositolhexakisphosphate (InsP6) which is essential for its necroptotic function. In Mus musculus (Mouse), this protein is Mixed lineage kinase domain-like protein.